A 946-amino-acid polypeptide reads, in one-letter code: DDB1- and CUL4-associated factor 5 (946 aa).

6 WD repeats span residues 51–91 (GHFG…HSRV), 99–139 (EHHS…LDVF), 140–180 (AHED…HGEP), 185–225 (NYPS…SSLL), 277–317 (FNSC…EAGG), and 331–370 (GHRSIVNQVRFNPHTYMICSSGVEKIIKIWSPYKQPGCTG). Residues 449-478 (GVSERSGYTDSESSASLPRSPPPTVDESAD) form a disordered region. The span at 454-465 (SGYTDSESSASL) shows a compositional bias: polar residues. The residue at position 500 (T500) is a Phosphothreonine. Disordered stretches follow at residues 527-656 (LSNE…MESV), 675-860 (SNNK…ELET), and 894-946 (CETP…KLKT). Phosphoserine occurs at positions 531 and 533. Residues 531–544 (SDSEENVCEAELDT) are compositionally biased toward acidic residues. A compositionally biased stretch (low complexity) spans 555–567 (PEDGSSSPSSSTS). A compositionally biased stretch (basic residues) spans 579 to 592 (ATTRQRNAMRRRQK). Residues 625–638 (LSPSPDSSPERSAS) are compositionally biased toward low complexity. Phosphoserine occurs at positions 626, 628, and 645. A compositionally biased stretch (basic and acidic residues) spans 691 to 701 (EGRAGTSHKDN). Polar residues-rich tracts occupy residues 760-769 (GTSQDTNNSG) and 808-819 (TLNSASGNCPRT).

Interacts with DDB1, CUL4A or CUL4B. Interacts with L3MBTL3. Interacts with SOX2. Interacts with DNMT1. Interacts with E2F1.

It functions in the pathway protein modification; protein ubiquitination. Functionally, is a substrate receptor for the CUL4-DDB1 E3 ubiquitin-protein ligase complex (CRL4), involved in the ubiquitination of a set of methylated non-histone proteins, including SOX2. The complex CRL4-DCAF5 is also involved in the ubiquitination of methylated DNMT1 and E2F1. This chain is DDB1- and CUL4-associated factor 5 (Dcaf5), found in Mus musculus (Mouse).